The sequence spans 415 residues: MRVLVRYASVMEACGLTVPPSRWRLALARMANRPAPESRPPRILRLRPTRTGLVLRLKLRPGQDAFDVAATTDRLRHSFGVYGVTSRELRSGVVEVRMTGYDVLQRVQMPATAETRPMRIPVALREDGAVHYRDYRAVPHGLTLGATESGKSVYQRNLVAGLAPHHVALVGIDCKQGVELFPLARRFSALADNPDTALDLLEALVGHMEDVYQLIRAEQRISVAVPDAEIAADIWDLREDLRPVPVVVLVDEVAELALFATKDEEKRRDRIITALVRLAQLGRAAGIYLEICGQRFGSELGKGITMLRAQLTGRTAHRVNDETSANMAFGDVSPDAVLAAIQIPTDTPGVAVTGDSTGGWARIRAPHTTLREAVNICNKHADRTPDVPALAAFRPALAPLPQARVPLSKTAPATA.

Positions 127-326 (DGAVHYRDYR…HRVNDETSAN (200 aa)) constitute a FtsK domain. 145–152 (GATESGKS) lines the ATP pocket.

The protein is Transfer protein TraSA (traSA) of Streptomyces ambofaciens.